Here is a 294-residue protein sequence, read N- to C-terminus: HTH-type transcriptional activator AmpR (294 aa).

Positions 6 to 63 constitute an HTH lysR-type domain; sequence IPLNSLRAFEAAARQLSFTKAAIELNVTHAAISQQVKALEQRLNCRLFIRISRGLVLT. The segment at residues 23-42 is a DNA-binding region (H-T-H motif); the sequence is FTKAAIELNVTHAAISQQVK.

It belongs to the LysR transcriptional regulatory family.

It localises to the cytoplasm. In terms of biological role, this protein is a positive regulator of gene expression of beta-lactamase (AmpC). This Yersinia enterocolitica protein is HTH-type transcriptional activator AmpR (ampR).